Reading from the N-terminus, the 594-residue chain is MAAPVKGNRKQSTEGDALDPPASPKPAGKQNGIQNPISLEDSPEAGGEREEEQEREEEQAFLVSLYKFMKERHTPIERVPHLGFKQINLWKIYKAVEKLGAYELVTGRRLWKNVYDELGGSPGSTSAATCTRRHYERLVLPYVRHLKGEDDKPLPTSKPRKQYKMAKENRGDDGATERPKKAKEERRMDQMMPGKTKADAADPAPLPSQEPPRNSTEQQGLASGSSVSFVGASGCPEAYKRLLSSFYCKGTHGIMSPLAKKKLLAQVSKVEALQCQEEGCRHGAEPQASPAVHLPESPQSPKGLTENSRHRLTPQEGLQAPGGSLREEAQAGPCPAAPIFKGCFYTHPTEVLKPVSQHPRDFFSRLKDGVLLGPPGKEGLSVKEPQLVWGGDANRPSAFHKGGSRKGILYPKPKACWVSPMAKVPAESPTLPPTFPSSPGLGSKRSLEEEGAAHSGKRLRAVSPFLKEADAKKCGAKPAGSGLVSCLLGPALGPVPPEAYRGTMLHCPLNFTGTPGPLKGQAALPFSPLVIPAFPAHFLATAGPSPMAAGLMHFPPTSFDSALRHRLCPASSAWHAPPVTTYAAPHFFHLNTKL.

Positions 1–56 are disordered; it reads MAAPVKGNRKQSTEGDALDPPASPKPAGKQNGIQNPISLEDSPEAGGEREEEQERE. An interaction with SOX9 region spans residues 1-300; sequence MAAPVKGNRK…AVHLPESPQS (300 aa). Serine 23 bears the Phosphoserine mark. The region spanning 55 to 147 is the ARID domain; it reads REEEQAFLVS…LVLPYVRHLK (93 aa). Residues lysine 85 and lysine 94 each participate in a glycyl lysine isopeptide (Lys-Gly) (interchain with G-Cter in ubiquitin) cross-link. The tract at residues 146 to 223 is disordered; it reads LKGEDDKPLP…NSTEQQGLAS (78 aa). Over residues 165–189 the composition is skewed to basic and acidic residues; the sequence is MAKENRGDDGATERPKKAKEERRMD. Phosphoserine occurs at positions 256 and 289. 2 disordered regions span residues 281 to 331 and 426 to 454; these read RHGA…EAQA and AESPTLPPTFPSSPGLGSKRSLEEEGAAH. A compositionally biased stretch (polar residues) spans 297 to 306; the sequence is SPQSPKGLTE. 2 positions are modified to phosphoserine: serine 438 and serine 463.

As to quaternary structure, interacts with SOX9. Interacts with ESR1. Interacts with RORC. In terms of processing, phosphorylated by MAPK14 on serine residues involving a TLR4 signaling pathway upon lipopolysaccharide (LPS) stimulation leading to its ubiquitination and proteasomal degradation. Ubiquitinated leading to proteasomal degradation; involving WWP1 linked to MAPK14-mediated phosphorylation upon LPS stimulation.

The protein localises to the nucleus. DNA-binding protein that may regulate transcription and act as a repressor by binding to AT-rich stretches in the promoter region of target genes. May positively regulate chondrocyte-specific transcription such as of COL2A1 in collaboration with SOX9 and positively regulate histone H3 acetylation at chondrocyte-specific genes. May stimulate early-stage chondrocyte differentiation and inhibit later stage differention. Can repress ESR1-mediated transcriptional activation; proposed to act as corepressor for selective nuclear hormone receptors. As an RNA-binding protein, involved in the regulation of inflammatory response by stabilizing selective inflammation-related mRNAs, such as STAT3 and TBX21. Also stabilizes IL6 mRNA. Binds to stem loop structures located in the 3'UTRs of IL6, STAT3 and TBX21 mRNAs; at least for STAT3 prevents binding of ZC3H12A to the mRNA stem loop structure thus inhibiting its degradation activity. Contributes to elevated IL6 levels possibly implicated in autoimmunity processes. IL6-dependent stabilization of STAT3 mRNA may promote differentiation of naive CD4+ T-cells into T-helper Th17 cells. In CD4+ T-cells may also inhibit RORC-induced Th17 cell differentiation independently of IL6 signaling. Stabilization of TBX21 mRNA contributes to elevated interferon-gamma secretion in Th1 cells possibly implicated in the establishment of septic shock. Stabilizes TNFRSF4/OX40 mRNA by binding to the conserved stem loop structure in its 3'UTR; thereby competing with the mRNA-destabilizing functions of RC3H1 and endoribonuclease ZC3H12A. The chain is AT-rich interactive domain-containing protein 5A (ARID5A) from Homo sapiens (Human).